A 300-amino-acid chain; its full sequence is C-4 methylsterol oxidase erg25 (300 aa).

One can recognise a Fatty acid hydroxylase domain in the interval 140 to 276 (TLFFFLEDTW…FRWWDAVLKT (137 aa)). The Histidine box-1 motif lies at 154–158 (HRLFH). Positions 167–171 (HKVHH) match the Histidine box-2 motif. Residues 186–206 (PLEIILLGAGTVFVPLMWCYF) form a helical membrane-spanning segment. The Histidine box-3 motif lies at 251 to 257 (HHDYHHM).

This sequence belongs to the sterol desaturase family. In terms of assembly, heterotetramer of erg25, erg26, erg27 and erg28. Erg28 acts as a scaffold to tether erg27 and other 4,4-demethylation-related enzymes, forming a demethylation enzyme complex, in the endoplasmic reticulum. Fe cation serves as cofactor.

It is found in the endoplasmic reticulum membrane. It catalyses the reaction 4,4-dimethyl-5alpha-cholesta-8,24-dien-3beta-ol + 6 Fe(II)-[cytochrome b5] + 3 O2 + 5 H(+) = 4beta-methylzymosterol-4alpha-carboxylate + 6 Fe(III)-[cytochrome b5] + 4 H2O. The enzyme catalyses 4alpha-methylzymosterol + 6 Fe(II)-[cytochrome b5] + 3 O2 + 5 H(+) = 4alpha-carboxyzymosterol + 6 Fe(III)-[cytochrome b5] + 4 H2O. Its pathway is steroid biosynthesis; zymosterol biosynthesis; zymosterol from lanosterol: step 3/6. It functions in the pathway steroid metabolism; ergosterol biosynthesis. In terms of biological role, C-4 methylsterol oxidase; part of the third module of ergosterol biosynthesis pathway that includes by the late steps of the pathway. Erg25 is a catalytic component of the C-4 demethylation complex that catalyzes the three-step monooxygenation required for the demethylation of 4,4-dimethyl and 4alpha-methylsterols. The third module or late pathway involves the ergosterol synthesis itself through consecutive reactions that mainly occur in the endoplasmic reticulum (ER) membrane. Firstly, the squalene synthase erg9 catalyzes the condensation of 2 farnesyl pyrophosphate moieties to form squalene, which is the precursor of all steroids. Secondly, squalene is converted into lanosterol by the consecutive action of the squalene epoxidase erg1 and the lanosterol synthase erg7. The lanosterol 14-alpha-demethylase erg11/cyp1 catalyzes C14-demethylation of lanosterol to produce 4,4'-dimethyl cholesta-8,14,24-triene-3-beta-ol. In the next steps, a complex process involving various demethylation, reduction and desaturation reactions catalyzed by the C-14 reductase erg24 and the C-4 demethylation complex erg25-erg26-erg27 leads to the production of zymosterol. Erg28 likely functions in the C-4 demethylation complex reaction by tethering erg26 and Erg27 to the endoplasmic reticulum or to facilitate interaction between these proteins. Then, the sterol 24-C-methyltransferase erg6 catalyzes the methyl transfer from S-adenosyl-methionine to the C-24 of zymosterol to form fecosterol. The C-8 sterol isomerase erg2 catalyzes the reaction which results in unsaturation at C-7 in the B ring of sterols and thus converts fecosterol to episterol. The sterol-C5-desaturases erg31 and erg32 then catalyze the introduction of a C-5 double bond in the B ring to produce 5-dehydroepisterol. The C-22 sterol desaturase erg5 further converts 5-dehydroepisterol into ergosta-5,7,22,24(28)-tetraen-3beta-ol by forming the C-22(23) double bond in the sterol side chain. Finally, ergosta-5,7,22,24(28)-tetraen-3beta-ol is substrate of the C-24(28) sterol reductase erg4 to produce ergosterol. In the genus Schizosaccharomyces, a second route exists between lanosterol and fecosterol, via the methylation of lanosterol to eburicol by erg6, followed by C14-demethylation by erg11/cyp1 and C4-demethylation by the demethylation complex erg25-erg26-erg27. This chain is C-4 methylsterol oxidase erg25, found in Schizosaccharomyces pombe (strain 972 / ATCC 24843) (Fission yeast).